Here is a 524-residue protein sequence, read N- to C-terminus: Probable plastidic glucose transporter 1 (524 aa).

12 helical membrane-spanning segments follow: residues 88–108, 122–142, 151–171, 179–199, 208–228, 239–259, 320–340, 357–377, 386–406, 420–440, 452–472, and 483–503; these read MANFLFGYHIGVMNGPIVSIA, LVVSIFIAGAFIGSIVAGPLV, FQIFTIPLILGALVSAQAHSL, FLVGLGIGVNTVLVPIYISEV, LGTLCQIGTCLGIIFSLLLGI, TMLYVASMPGFLLALGMQFAV, VAFIGGSLFVLQQFAGINGVL, QASLYVGVTNFAGALCASYLI, LIGSYLGMAVSMFLIVYAVGF, GTLMYIFSFAIGAGPVTGLII, IMGFSFSVHWVSNFLVGLFFL, and VYASFGSVSLLAAAFSHLFTV.

This sequence belongs to the major facilitator superfamily. Sugar transporter (TC 2.A.1.1) family.

The protein localises to the plastid. It is found in the chloroplast membrane. May be involved in the efflux of glucose towards the cytosol. The polypeptide is Probable plastidic glucose transporter 1 (Arabidopsis thaliana (Mouse-ear cress)).